The chain runs to 277 residues: Large ribosomal subunit protein uL2 (277 aa).

2 disordered regions span residues methionine 1–histidine 58 and glycine 223–arginine 277. Over residues glutamate 23–leucine 33 the composition is skewed to basic and acidic residues. Basic residues predominate over residues leucine 37–histidine 58. The span at glycine 251–isoleucine 267 shows a compositional bias: basic and acidic residues. Basic residues predominate over residues valine 268 to arginine 277.

The protein belongs to the universal ribosomal protein uL2 family. As to quaternary structure, part of the 50S ribosomal subunit. Forms a bridge to the 30S subunit in the 70S ribosome.

Functionally, one of the primary rRNA binding proteins. Required for association of the 30S and 50S subunits to form the 70S ribosome, for tRNA binding and peptide bond formation. It has been suggested to have peptidyltransferase activity; this is somewhat controversial. Makes several contacts with the 16S rRNA in the 70S ribosome. The protein is Large ribosomal subunit protein uL2 of Saccharopolyspora erythraea (strain ATCC 11635 / DSM 40517 / JCM 4748 / NBRC 13426 / NCIMB 8594 / NRRL 2338).